Here is a 365-residue protein sequence, read N- to C-terminus: Geranylgeranyl pyrophosphate synthase (365 aa).

The segment covering 1-11 (MKPLPSTNGKV) has biased composition (polar residues). Residues 1–36 (MKPLPSTNGKVNGNGKHHDSSLSSTSSTSSSSSSDT) form a disordered region. A compositionally biased stretch (low complexity) spans 21–34 (SLSSTSSTSSSSSS). Lys-78, Arg-81, and His-110 together coordinate isopentenyl diphosphate. Residues Asp-117 and Asp-121 each coordinate Mg(2+). Position 126 (Arg-126) interacts with dimethylallyl diphosphate. Isopentenyl diphosphate is bound at residue Arg-127. Residues Lys-211, Thr-212, and Gln-247 each contribute to the dimethylallyl diphosphate site. Residue Asp-250 coordinates Mg(2+). Positions 254, 263, and 273 each coordinate dimethylallyl diphosphate.

The protein belongs to the FPP/GGPP synthase family. Mg(2+) is required as a cofactor.

The catalysed reaction is isopentenyl diphosphate + dimethylallyl diphosphate = (2E)-geranyl diphosphate + diphosphate. It carries out the reaction isopentenyl diphosphate + (2E)-geranyl diphosphate = (2E,6E)-farnesyl diphosphate + diphosphate. It catalyses the reaction isopentenyl diphosphate + (2E,6E)-farnesyl diphosphate = (2E,6E,10E)-geranylgeranyl diphosphate + diphosphate. In terms of biological role, geranylgeranyl pyrophosphate synthase that catalyzes the trans-addition of the three molecules of IPP onto DMAPP to form geranylgeranyl pyrophosphate. Does not show any monoterpene nor sesquiterpene synthase activity. The polypeptide is Geranylgeranyl pyrophosphate synthase (Melampsora lini (Rust fungus)).